Consider the following 72-residue polypeptide: Translation initiation factor IF-1 (72 aa).

The S1-like domain maps to 1 to 72; that stretch reads MAKSDVIEME…SKGRIVYRAR (72 aa).

The protein belongs to the IF-1 family. In terms of assembly, component of the 30S ribosomal translation pre-initiation complex which assembles on the 30S ribosome in the order IF-2 and IF-3, IF-1 and N-formylmethionyl-tRNA(fMet); mRNA recruitment can occur at any time during PIC assembly.

It is found in the cytoplasm. Functionally, one of the essential components for the initiation of protein synthesis. Stabilizes the binding of IF-2 and IF-3 on the 30S subunit to which N-formylmethionyl-tRNA(fMet) subsequently binds. Helps modulate mRNA selection, yielding the 30S pre-initiation complex (PIC). Upon addition of the 50S ribosomal subunit IF-1, IF-2 and IF-3 are released leaving the mature 70S translation initiation complex. The protein is Translation initiation factor IF-1 of Marinobacter nauticus (strain ATCC 700491 / DSM 11845 / VT8) (Marinobacter aquaeolei).